A 288-amino-acid chain; its full sequence is 30 kDa spicule matrix protein (288 aa).

Residues 1–20 (MRCFVYVLVCVVASVSYSRA) form the signal peptide. The region spanning 93–163 (ANMYCGQMHP…YTNWEGMVAP (71 aa)) is the C-type lectin domain. N-linked (GlcNAc...) asparagine glycosylation is present at Asn-103.

As to expression, spines and tube feet.

Matrix protein of the sea urchin embryo spicule. The function of the matrix proteins is to direct crystal growth in certain orientations and inhibit growth in others. The polypeptide is 30 kDa spicule matrix protein (SM30) (Hemicentrotus pulcherrimus (Sea urchin)).